Here is a 535-residue protein sequence, read N- to C-terminus: Calcium-dependent protein kinase 1 (535 aa).

The interval 1 to 34 (MGCNQSKSANDVRGNKVNNVNSKKKNNKREDIND) is disordered. G2 carries N-myristoyl glycine lipidation. A lipid anchor (S-palmitoyl cysteine) is attached at C3. In terms of domain architecture, Protein kinase spans 57–324 (YFKVRKLGSG…AEEALNSRWI (268 aa)). ATP is bound by residues 63-71 (LGSGAYGEV) and K86. S65 carries the phosphoserine modification. A Phosphoserine modification is found at S117. D190 functions as the Proton acceptor in the catalytic mechanism. S216 and S219 each carry phosphoserine. Position 230 is a phosphothreonine (T230). Phosphoserine is present on S334. A J domain autoinhibitory motif motif is present at residues 345 to 352 (NMRKFEGS). The j domain stretch occupies residues 345-363 (NMRKFEGSQKLAQAAILFI). A J domain interacts with the EF-hand domains motif is present at residues 353-363 (QKLAQAAILFI). 4 EF-hand domains span residues 371–406 (EERK…LRNF), 415–450 (NVEE…KQIL), 451–486 (FSEE…GFYF), and 497–532 (VSEK…ICDN). The Ca(2+) site is built by D384, N386, D388, Q390, E395, D428, D430, N432, Y434, E439, D464, D466, S468, K470, E475, D510, N512, D514, M516, and E521.

This sequence belongs to the protein kinase superfamily. Ser/Thr protein kinase family. CDPK subfamily. As to quaternary structure, monomer. Mg(2+) serves as cofactor. Myristoylated. Myristoylation and palmitoylation are required for the localization to the parasitophorous vacuole membrane. Post-translationally, palmitoylated. Palmitoylation increases in merozoites in response to low level of extracellular K(+) in the host blood. Myristoylation and palmitoylation are required for the localization to the parasitophorous vacuole membrane. In terms of processing, phosphorylation at Thr-230 may regulate CDPK1 kinase activity. Phosphorylation increases in response to an increase in intracellular Ca(2+) levels. Autophosphorylated in vitro. Autophosphorylation does not affect membrane localization in vitro.

It localises to the membrane. It is found in the cell membrane. The protein localises to the parasitophorous vacuole membrane. The protein resides in the cytoplasm. Its subcellular location is the cell projection. It localises to the cilium. It is found in the flagellum. The protein localises to the host cell membrane. The catalysed reaction is L-seryl-[protein] + ATP = O-phospho-L-seryl-[protein] + ADP + H(+). It carries out the reaction L-threonyl-[protein] + ATP = O-phospho-L-threonyl-[protein] + ADP + H(+). With respect to regulation, activated by calcium. Upon calcium binding to the EF-hand domains, the C-terminus of the junction domain (J domain) undergoes a conformational change which results in the dissociation of the pseudo-substrate inhibitory motif from the catalytic domain. This, in turn may facilitate the autophosphorylation of the activation loop at Thr-230, which leads to the kinase activation. Its function is as follows. Calcium-dependent protein kinase which acts as a sensor and effector of intracellular Ca(2+) levels probably in part downstream of cGMP-activated PKG kinase. During the liver stage, involved in sporozoite motility and thus in sporozoite invasion of host hepatocytes, probably together with CDPK4 and CDPK5. In the mosquito midgut and during the last stage of male gamete exflagellation, may play a role in the rupture of the host erythrocyte membrane. In the mosquito midgut, required for the differentiation of the zygote into the ookinete by promoting the translational activation of a subset of repressed mRNAs; these mRNAs are kept repressed in the zygote by the DOZI- or CITH-containing mRNP complexes. Dispensable during the asexual blood stage. In Plasmodium yoelii yoelii, this protein is Calcium-dependent protein kinase 1.